Here is a 233-residue protein sequence, read N- to C-terminus: Putative N-acetylmuramoyl-L-alanine amidase (233 aa).

Residues 1–219 enclose the MurNAc-LAA domain; sequence MIDPGHGGQD…IANAIYIALK (219 aa).

It belongs to the N-acetylmuramoyl-L-alanine amidase 3 family.

It is found in the secreted. It carries out the reaction Hydrolyzes the link between N-acetylmuramoyl residues and L-amino acid residues in certain cell-wall glycopeptides.. Cell-wall hydrolase involved in septum cleavage during cell division. This chain is Putative N-acetylmuramoyl-L-alanine amidase (amiB), found in Buchnera aphidicola subsp. Schizaphis graminum (strain Sg).